The primary structure comprises 335 residues: Methionine import ATP-binding protein MetN (335 aa).

The 240-residue stretch at 2-241 (IQFQRLHKSY…PKHATTRRFV (240 aa)) folds into the ABC transporter domain. An ATP-binding site is contributed by 38-45 (GHSGAGKS).

Belongs to the ABC transporter superfamily. Methionine importer (TC 3.A.1.24) family. The complex is composed of two ATP-binding proteins (MetN), two transmembrane proteins (MetI) and a solute-binding protein (MetQ).

It is found in the cell inner membrane. It catalyses the reaction L-methionine(out) + ATP + H2O = L-methionine(in) + ADP + phosphate + H(+). The enzyme catalyses D-methionine(out) + ATP + H2O = D-methionine(in) + ADP + phosphate + H(+). In terms of biological role, part of the ABC transporter complex MetNIQ involved in methionine import. Responsible for energy coupling to the transport system. The sequence is that of Methionine import ATP-binding protein MetN from Xanthomonas euvesicatoria pv. vesicatoria (strain 85-10) (Xanthomonas campestris pv. vesicatoria).